A 109-amino-acid polypeptide reads, in one-letter code: Probable gas vesicle protein J1 (109 aa).

It belongs to the gas vesicle GvpA family. Interacts with GvpA.

It localises to the gas vesicle. Its function is as follows. A minor component of the gas vesicle, might be involved in nucleating gas vesicle formation. Gas vesicles (GV) are hollow, gas filled proteinaceous nanostructures. It is not clear what function GVs perform in soil bacteria. This is Probable gas vesicle protein J1 (gvpJ1) from Streptomyces coelicolor (strain ATCC BAA-471 / A3(2) / M145).